Consider the following 229-residue polypeptide: Potassium/proton antiporter CemA (229 aa).

4 helical membrane-spanning segments follow: residues phenylalanine 7–phenylalanine 27, leucine 114–leucine 134, isoleucine 154–isoleucine 174, and isoleucine 189–isoleucine 209.

It belongs to the CemA family.

The protein resides in the plastid. It is found in the chloroplast inner membrane. The catalysed reaction is K(+)(in) + H(+)(out) = K(+)(out) + H(+)(in). Its function is as follows. Contributes to K(+)/H(+) antiport activity by supporting proton efflux to control proton extrusion and homeostasis in chloroplasts in a light-dependent manner to modulate photosynthesis. Prevents excessive induction of non-photochemical quenching (NPQ) under continuous-light conditions. Indirectly promotes efficient inorganic carbon uptake into chloroplasts. This Gossypium hirsutum (Upland cotton) protein is Potassium/proton antiporter CemA.